Here is a 281-residue protein sequence, read N- to C-terminus: Homeobox protein Hox-A5 (281 aa).

Disordered stretches follow at residues 65–144 (VGNE…PCSS) and 162–183 (PLEE…SDST). Polar residues-rich tracts occupy residues 68–99 (ERTQ…STGT) and 114–127 (VASS…QSQH). The span at 132–144 (NSITTPCSTPCSS) shows a compositional bias: low complexity. Positions 172 to 183 (APTTPQNVSDST) are enriched in polar residues. The Antp-type hexapeptide motif lies at 187–192 (IYPWMR). A DNA-binding region (homeobox) is located at residues 205–264 (GKRARTAYTRYQTLELEKEFHFNRYLTRRRRIEIAHALCLSERQIKIWFQNRRMKWKKDN).

It belongs to the Antp homeobox family.

It localises to the nucleus. Sequence-specific transcription factor which is part of a developmental regulatory system that provides cells with specific positional identities on the anterior-posterior axis. The polypeptide is Homeobox protein Hox-A5 (hoxa5) (Morone saxatilis (Striped bass)).